The primary structure comprises 497 residues: Kynureninase (497 aa).

Residues 59-86 form a disordered region; it reads GRLPAYPPNHAKPGETATAQNGTSNTND. Polar residues predominate over residues 75-86; the sequence is ATAQNGTSNTND. Residues Leu-166, Thr-167, 194 to 197, Asp-278, His-281, and Tyr-303 each bind pyridoxal 5'-phosphate; that span reads FPSD. Lys-304 carries the N6-(pyridoxal phosphate)lysine modification. Pyridoxal 5'-phosphate is bound by residues Trp-337 and Asn-365.

It belongs to the kynureninase family. Homodimer. It depends on pyridoxal 5'-phosphate as a cofactor.

It localises to the cytoplasm. The catalysed reaction is L-kynurenine + H2O = anthranilate + L-alanine + H(+). It catalyses the reaction 3-hydroxy-L-kynurenine + H2O = 3-hydroxyanthranilate + L-alanine + H(+). It functions in the pathway amino-acid degradation; L-kynurenine degradation; L-alanine and anthranilate from L-kynurenine: step 1/1. It participates in cofactor biosynthesis; NAD(+) biosynthesis; quinolinate from L-kynurenine: step 2/3. In terms of biological role, catalyzes the cleavage of L-kynurenine (L-Kyn) and L-3-hydroxykynurenine (L-3OHKyn) into anthranilic acid (AA) and 3-hydroxyanthranilic acid (3-OHAA), respectively. The protein is Kynureninase of Pyricularia oryzae (strain 70-15 / ATCC MYA-4617 / FGSC 8958) (Rice blast fungus).